The sequence spans 299 residues: Coenzyme PQQ synthesis protein B (299 aa).

The protein belongs to the PqqB family.

Its pathway is cofactor biosynthesis; pyrroloquinoline quinone biosynthesis. Its function is as follows. May be involved in the transport of PQQ or its precursor to the periplasm. The chain is Coenzyme PQQ synthesis protein B from Xanthomonas euvesicatoria pv. vesicatoria (strain 85-10) (Xanthomonas campestris pv. vesicatoria).